The chain runs to 277 residues: Large ribosomal subunit protein uL2 (277 aa).

Positions 222–277 are disordered; it reads GVAMNPVDHPHGGGEGRTSGGRHPVTPWGKPTKGKKTRSNKATDKFIMRSRHQRKK.

It belongs to the universal ribosomal protein uL2 family. In terms of assembly, part of the 50S ribosomal subunit. Forms a bridge to the 30S subunit in the 70S ribosome.

Functionally, one of the primary rRNA binding proteins. Required for association of the 30S and 50S subunits to form the 70S ribosome, for tRNA binding and peptide bond formation. It has been suggested to have peptidyltransferase activity; this is somewhat controversial. Makes several contacts with the 16S rRNA in the 70S ribosome. This is Large ribosomal subunit protein uL2 from Brucella abortus (strain S19).